We begin with the raw amino-acid sequence, 499 residues long: Heparin cofactor 2 (499 aa).

The first 19 residues, 1–19 (MKHSLNALLIFLIITSAWG), serve as a signal peptide directing secretion. Serine 37 is subject to Phosphoserine; by FAM20C. Asparagine 49 carries an N-linked (GlcNAc...) (complex) asparagine glycan. The tract at residues 68-79 (DWIPEGEEDDDY) is chemotactic activity. 2 consecutive repeat copies span residues 73–83 (GEEDDDYLDLE) and 87–97 (SEDDDYIDIVD). Positions 73–97 (GEEDDDYLDLEKIFSEDDDYIDIVD) are 2 X 11 AA approximate repeats, Asp/Glu-rich (acidic) (hirudin-like). 2 positions are modified to sulfotyrosine: tyrosine 79 and tyrosine 92. An N-linked (GlcNAc...) asparagine glycan is attached at asparagine 188. The interval 192 to 212 (KYEITTIHNLFRKLTHRLFRR) is glycosaminoglycan-binding site. Asparagine 387 carries N-linked (GlcNAc...) asparagine glycosylation.

This sequence belongs to the serpin family. Post-translationally, phosphorylated by FAM20C in the extracellular medium. Expressed predominantly in liver. Also present in plasma. As to expression, expressed in plasma (at protein level). Expressed in liver.

Its function is as follows. Thrombin inhibitor activated by the glycosaminoglycans, heparin or dermatan sulfate. In the presence of the latter, HC-II becomes the predominant thrombin inhibitor in place of antithrombin III (AT-III). Also inhibits chymotrypsin, but in a glycosaminoglycan-independent manner. In terms of biological role, peptides at the N-terminal of HC-II have chemotactic activity for both monocytes and neutrophils. Shows negligible inhibition, in vitro, of thrombin and tPA and no inhibition of factor Xa, in vitro. This Homo sapiens (Human) protein is Heparin cofactor 2 (SERPIND1).